Here is a 418-residue protein sequence, read N- to C-terminus: UDP-N-acetylglucosamine 1-carboxyvinyltransferase 2 (418 aa).

Position 22 to 23 (22 to 23) interacts with phosphoenolpyruvate; that stretch reads KN. Arg93 is a binding site for UDP-N-acetyl-alpha-D-glucosamine. Catalysis depends on Cys117, which acts as the Proton donor. At Cys117 the chain carries 2-(S-cysteinyl)pyruvic acid O-phosphothioketal. UDP-N-acetyl-alpha-D-glucosamine-binding positions include 122 to 126, Asp305, and Ile327; that span reads RPIDQ.

It belongs to the EPSP synthase family. MurA subfamily.

Its subcellular location is the cytoplasm. It carries out the reaction phosphoenolpyruvate + UDP-N-acetyl-alpha-D-glucosamine = UDP-N-acetyl-3-O-(1-carboxyvinyl)-alpha-D-glucosamine + phosphate. It functions in the pathway cell wall biogenesis; peptidoglycan biosynthesis. Its function is as follows. Cell wall formation. Adds enolpyruvyl to UDP-N-acetylglucosamine. The polypeptide is UDP-N-acetylglucosamine 1-carboxyvinyltransferase 2 (Clostridium acetobutylicum (strain ATCC 824 / DSM 792 / JCM 1419 / IAM 19013 / LMG 5710 / NBRC 13948 / NRRL B-527 / VKM B-1787 / 2291 / W)).